The primary structure comprises 211 residues: Peptidyl-prolyl cis-trans isomerase FKBP14 (211 aa).

The N-terminal stretch at 1–19 (MRFFLWNAILALWVTVLSG) is a signal peptide. Cysteine 38 and cysteine 96 are joined by a disulfide. The 91-residue stretch at 45–135 (GDLMLVHYEG…IFNIDLLEIR (91 aa)) folds into the PPIase FKBP-type domain. The 36-residue stretch at 135-170 (RNGPRSHESFQEMDLNDDWRLSKHEVKVYLQKEFEK) folds into the EF-hand 1 domain. Residues aspartate 148, asparagine 150, aspartate 152, arginine 154, and glutamate 159 each coordinate Ca(2+). An N-linked (GlcNAc...) asparagine glycan is attached at asparagine 176. In terms of domain architecture, EF-hand 2 spans 179-211 (HHDALVEDIFDKEDEDKDGFISAREFTYVHDEL). Ca(2+) is bound by residues aspartate 192, aspartate 194, aspartate 196, and glutamate 203. Positions 208 to 211 (HDEL) match the Prevents secretion from ER motif.

As to quaternary structure, monomer. Homodimer. Interacts with type III, type IV and type X collagens.

The protein localises to the endoplasmic reticulum lumen. It catalyses the reaction [protein]-peptidylproline (omega=180) = [protein]-peptidylproline (omega=0). With respect to regulation, inhibited by tacrolimus/FK506. Its function is as follows. PPIase which accelerates the folding of proteins during protein synthesis. Has a preference for substrates containing 4-hydroxylproline modifications, including type III collagen. May also target type VI and type X collagens. The protein is Peptidyl-prolyl cis-trans isomerase FKBP14 (Fkbp14) of Mus musculus (Mouse).